Reading from the N-terminus, the 359-residue chain is Centromere-binding protein 1 (359 aa).

Positions 1 to 262 (MSGKRSYQDD…SHKEVERRRR (262 aa)) are disordered. Basic and acidic residues predominate over residues 55-78 (KENKENRDGDKVGDDEHDVVKGES). Residues 120–161 (GDEDEDEDEEEEEDEDDHVDIDDVDKDPDAVIDEDDDEEDED) show a composition bias toward acidic residues. Over residues 249-259 (QRKESHKEVER) the composition is skewed to basic and acidic residues. Positions 249–297 (QRKESHKEVERRRRQNINTAIEKLSDLLPVKETSKAAILSRAAEYIQKM) constitute a bHLH domain.

Binds DNA as a dimer.

The protein localises to the nucleus. The protein resides in the chromosome. It is found in the centromere. In terms of biological role, required for chromosome stability and methionine prototrophy. It is involved in chromosomal segregation. Binds to a highly conserved DNA sequence (5'-RTCACRTG-3'), called CDEI, found in centromeres and in several promoters. The chain is Centromere-binding protein 1 (CBF1) from Kluyveromyces lactis (strain ATCC 8585 / CBS 2359 / DSM 70799 / NBRC 1267 / NRRL Y-1140 / WM37) (Yeast).